Here is a 350-residue protein sequence, read N- to C-terminus: Transmembrane protein 185B (350 aa).

The next 7 membrane-spanning stretches (helical) occupy residues 16 to 36, 41 to 61, 81 to 101, 111 to 131, 168 to 188, 211 to 231, and 240 to 260; these read LIYA…DGVI, WAVF…ASVG, FKAM…EVLV, FWLL…AACV, WLVV…VVLY, VTMA…EVLL, and MFSY…LMAT.

It belongs to the TMEM185 family.

It is found in the membrane. This chain is Transmembrane protein 185B (TMEM185B), found in Bos taurus (Bovine).